A 447-amino-acid chain; its full sequence is Folate synthesis bifunctional protein (447 aa).

An HPPK region spans residues 1-165; sequence MTTAQFICLS…SFGEIAHLLP (165 aa). The 260-residue stretch at 179 to 438 folds into the Pterin-binding domain; it reads TLLMGVVNVT…DVEANQRVLS (260 aa). Positions 181-447 are DHPS; it reads LMGVVNVTDN…SAAAWSGVHV (267 aa). Asn186 contacts Mg(2+). Residues Thr226, Asp266, Asn286, Asp356, Lys392, and 426–428 contribute to the (7,8-dihydropterin-6-yl)methyl diphosphate site; that span reads RVH.

It in the C-terminal section; belongs to the DHPS family. This sequence in the N-terminal section; belongs to the HPPK family. The cofactor is Mg(2+).

It catalyses the reaction 6-hydroxymethyl-7,8-dihydropterin + ATP = (7,8-dihydropterin-6-yl)methyl diphosphate + AMP + H(+). It carries out the reaction (7,8-dihydropterin-6-yl)methyl diphosphate + 4-aminobenzoate = 7,8-dihydropteroate + diphosphate. It functions in the pathway cofactor biosynthesis; tetrahydrofolate biosynthesis; 2-amino-4-hydroxy-6-hydroxymethyl-7,8-dihydropteridine diphosphate from 7,8-dihydroneopterin triphosphate: step 4/4. Its pathway is cofactor biosynthesis; tetrahydrofolate biosynthesis; 7,8-dihydrofolate from 2-amino-4-hydroxy-6-hydroxymethyl-7,8-dihydropteridine diphosphate and 4-aminobenzoate: step 1/2. The polypeptide is Folate synthesis bifunctional protein (folKP) (Chlamydia caviae (strain ATCC VR-813 / DSM 19441 / 03DC25 / GPIC) (Chlamydophila caviae)).